The following is a 160-amino-acid chain: SsrA-binding protein (160 aa).

It belongs to the SmpB family.

It localises to the cytoplasm. Required for rescue of stalled ribosomes mediated by trans-translation. Binds to transfer-messenger RNA (tmRNA), required for stable association of tmRNA with ribosomes. tmRNA and SmpB together mimic tRNA shape, replacing the anticodon stem-loop with SmpB. tmRNA is encoded by the ssrA gene; the 2 termini fold to resemble tRNA(Ala) and it encodes a 'tag peptide', a short internal open reading frame. During trans-translation Ala-aminoacylated tmRNA acts like a tRNA, entering the A-site of stalled ribosomes, displacing the stalled mRNA. The ribosome then switches to translate the ORF on the tmRNA; the nascent peptide is terminated with the 'tag peptide' encoded by the tmRNA and targeted for degradation. The ribosome is freed to recommence translation, which seems to be the essential function of trans-translation. The sequence is that of SsrA-binding protein from Salmonella arizonae (strain ATCC BAA-731 / CDC346-86 / RSK2980).